The sequence spans 156 residues: Putative pre-16S rRNA nuclease (156 aa).

This sequence belongs to the YqgF nuclease family.

Its subcellular location is the cytoplasm. Functionally, could be a nuclease involved in processing of the 5'-end of pre-16S rRNA. In Aromatoleum aromaticum (strain DSM 19018 / LMG 30748 / EbN1) (Azoarcus sp. (strain EbN1)), this protein is Putative pre-16S rRNA nuclease.